We begin with the raw amino-acid sequence, 224 residues long: Synaptogyrin-2 (224 aa).

At Met-1 the chain carries N-acetylmethionine. Residue Ser-3 is modified to Phosphoserine. In terms of domain architecture, MARVEL spans 20–171 (FLTQPQVVAR…LASLAYQRYK (152 aa)). 4 consecutive transmembrane segments (helical) span residues 26–46 (VVAR…IYGE), 73–93 (AIGV…AYFP), 105–125 (VIGD…GFCF), and 147–167 (AAIT…SLAY).

The protein belongs to the synaptogyrin family. (Microbial infection) Interacts with SFTS phlebovirus protein NSs; may be involved in virus replication. Post-translationally, may be tyrosine phosphorylated by Src. As to expression, ubiquitous; low expression in brain.

Its subcellular location is the cytoplasmic vesicle membrane. The protein localises to the cytoplasmic vesicle. It is found in the secretory vesicle. The protein resides in the synaptic vesicle membrane. It localises to the lipid droplet. May play a role in regulated exocytosis. In neuronal cells, modulates the localization of synaptophysin/SYP into synaptic-like microvesicles and may therefore play a role in the formation and/or the maturation of this vesicles. May also play a role in GLUT4 storage and transport to the plasma membrane. In terms of biological role, (Microbial infection) May play a role in the assembly of cytoplasmic inclusion bodies required for SFTS phlebovirus replication. This chain is Synaptogyrin-2, found in Homo sapiens (Human).